The sequence spans 406 residues: Acetate kinase (406 aa).

Asparagine 7 serves as a coordination point for Mg(2+). Lysine 14 serves as a coordination point for ATP. Arginine 90 is a binding site for substrate. Aspartate 147 acts as the Proton donor/acceptor in catalysis. Residues 207–211 (HLGNG), 283–285 (DMR), and 331–335 (GVGEN) contribute to the ATP site. Glutamate 385 provides a ligand contact to Mg(2+).

Belongs to the acetokinase family. As to quaternary structure, homodimer. Requires Mg(2+) as cofactor. Mn(2+) is required as a cofactor.

Its subcellular location is the cytoplasm. It catalyses the reaction acetate + ATP = acetyl phosphate + ADP. The protein operates within metabolic intermediate biosynthesis; acetyl-CoA biosynthesis; acetyl-CoA from acetate: step 1/2. Functionally, catalyzes the formation of acetyl phosphate from acetate and ATP. Can also catalyze the reverse reaction. The sequence is that of Acetate kinase from Thermosipho melanesiensis (strain DSM 12029 / CIP 104789 / BI429).